The sequence spans 765 residues: LPS-assembly protein LptD (765 aa).

Positions 1–18 are cleaved as a signal peptide; sequence MQIRYLLALSLLPKLVLA.

This sequence belongs to the LptD family. In terms of assembly, component of the lipopolysaccharide transport and assembly complex. Interacts with LptE and LptA.

It is found in the cell outer membrane. Together with LptE, is involved in the assembly of lipopolysaccharide (LPS) at the surface of the outer membrane. In Shewanella oneidensis (strain ATCC 700550 / JCM 31522 / CIP 106686 / LMG 19005 / NCIMB 14063 / MR-1), this protein is LPS-assembly protein LptD.